We begin with the raw amino-acid sequence, 182 residues long: Large ribosomal subunit protein bL25 (182 aa).

It belongs to the bacterial ribosomal protein bL25 family. CTC subfamily. As to quaternary structure, part of the 50S ribosomal subunit; part of the 5S rRNA/L5/L18/L25 subcomplex. Contacts the 5S rRNA. Binds to the 5S rRNA independently of L5 and L18.

Functionally, this is one of the proteins that binds to the 5S RNA in the ribosome where it forms part of the central protuberance. This Borreliella burgdorferi (strain ZS7) (Borrelia burgdorferi) protein is Large ribosomal subunit protein bL25.